Here is a 312-residue protein sequence, read N- to C-terminus: Zinc finger CCCH domain-containing protein 25 (312 aa).

Residues 36–114 (AYVFVGGIPY…RIVRVDHVSK (79 aa)) enclose the RRM domain. The C3H1-type zinc-finger motif lies at 130-157 (REARGVCYAFQKGECNRGASCRYSHDEQ). A disordered region spans residues 153–312 (SHDEQRNANT…DSERYRKSRR (160 aa)). Composition is skewed to basic and acidic residues over residues 166 to 184 (SKEE…EPPM), 197 to 210 (RFPD…KSTG), and 219 to 312 (EAYK…KSRR).

The protein is Zinc finger CCCH domain-containing protein 25 of Oryza sativa subsp. japonica (Rice).